Consider the following 36-residue polypeptide: Photosystem I reaction center subunit VIII (36 aa).

A helical membrane pass occupies residues 9–29 (ILVPLVGLVFPAVTMASLFLY).

The protein belongs to the PsaI family.

It localises to the plastid. The protein localises to the chloroplast thylakoid membrane. Functionally, may help in the organization of the PsaL subunit. The polypeptide is Photosystem I reaction center subunit VIII (Staurastrum punctulatum (Green alga)).